We begin with the raw amino-acid sequence, 765 residues long: MPNSTTEDSVAVPLLPSLRRATNSTSQVAIVGANVCPIESLDYEIAENDFFKQDWRGRSKVEIFQYVFMKWLLCFCIGIIVSLIGFANNLAVENLAGVKFVVTSNMMIAGRFAMGFVVFSVTNLILTLFASVITAFVAPAAAGSGIPEVKAYLNGVDAPEIFSLRTLIIKIIGNISAVSASLLIGKAGPMVHTGACVASILGQGGSKRYRLTWRWLRFFKNDRDRRDLVTCGAAAGIAASFRAPVGGVLFALEEMSSWWRSALLWRIFFSTAVVAIVLRALIDVCLSGKCGLFGKGGLIMFDVYSENASYHLGDVLPVLLLGVVGGILGSLYNFLLDKVLRAYNYIYEKGVTWKILLACAISIFTSCLLFGLPFLASCQPCPVDALEECPTIGRSGNFKKYQCPPGHYNDLASLIFNTNDDAIKNLFSKNTDFEFHYFSVLVFFVTCFFLSIFSYGIVAPAGLFVPVIVTGASYGRFVGMLLGSNSNLNHGLFAVLGAASFLGGTMRMTVSTCVILLELTNNLLLLPMMMVVLLISKTVADGFNANIYNLIMKLKGFPYLYSHAEPYMRQLLVGDVVTGPLQVFNGIEKVETIVHVLKTTNHNGFPVVDGPPLAAAPVLHGLILRAHILTLLKKRVFMPSPVACDSNTLSQFKAEEFAKKGSGRSDKIEDVELSEEELNMYLDLHPFSNASPYTVVETMSLAKALILFREVGIRHLLVIPKTSNRPPVVGILTRHDFMPEHILGLHPSVSRSKWKRLRIRLPFFS.

The next 12 membrane-spanning stretches (helical) occupy residues 67 to 87 (VFMK…IGFA), 116 to 136 (FVVF…ITAF), 167 to 187 (LIIK…IGKA), 190 to 210 (MVHT…KRYR), 232 to 252 (GAAA…LFAL), 262 to 282 (ALLW…RALI), 315 to 335 (VLPV…YNFL), 355 to 375 (ILLA…LPFL), 438 to 458 (FSVL…YGIV), 462 to 482 (GLFV…GMLL), 494 to 514 (AVLG…STCV), and 515 to 535 (ILLE…VLLI). The region spanning 568 to 640 (MRQLLVGDVV…LLKKRVFMPS (73 aa)) is the CBS 1 domain. Serine 646 bears the Phosphoserine mark. The region spanning 687-748 (FSNASPYTVV…PEHILGLHPS (62 aa)) is the CBS 2 domain. Residues 715-735 (HLLVIPKTSNRPPVVGILTRH) form a helical membrane-spanning segment.

The protein belongs to the chloride channel (TC 2.A.49) family. As to quaternary structure, homodimer. Interacts with PP2A5.

The protein localises to the membrane. Its function is as follows. Putative voltage-gated chloride channel. The sequence is that of Putative chloride channel-like protein CLC-g (CLC-G) from Arabidopsis thaliana (Mouse-ear cress).